We begin with the raw amino-acid sequence, 427 residues long: 3-phosphoshikimate 1-carboxyvinyltransferase (427 aa).

Residues K20, S21, and R25 each coordinate 3-phosphoshikimate. Phosphoenolpyruvate is bound at residue K20. 2 residues coordinate phosphoenolpyruvate: G92 and R120. The 3-phosphoshikimate site is built by S166, Q168, D312, and K339. Q168 lines the phosphoenolpyruvate pocket. Catalysis depends on D312, which acts as the Proton acceptor. Residues R343 and R385 each contribute to the phosphoenolpyruvate site.

This sequence belongs to the EPSP synthase family. In terms of assembly, monomer.

It localises to the cytoplasm. It catalyses the reaction 3-phosphoshikimate + phosphoenolpyruvate = 5-O-(1-carboxyvinyl)-3-phosphoshikimate + phosphate. Its pathway is metabolic intermediate biosynthesis; chorismate biosynthesis; chorismate from D-erythrose 4-phosphate and phosphoenolpyruvate: step 6/7. Catalyzes the transfer of the enolpyruvyl moiety of phosphoenolpyruvate (PEP) to the 5-hydroxyl of shikimate-3-phosphate (S3P) to produce enolpyruvyl shikimate-3-phosphate and inorganic phosphate. The sequence is that of 3-phosphoshikimate 1-carboxyvinyltransferase from Streptococcus pneumoniae serotype 19F (strain G54).